We begin with the raw amino-acid sequence, 177 residues long: Protein ParB (177 aa).

Positions 1–26 are cleaved as a signal peptide; it reads MKRRSYAMLRAAAALAVLVVASPAWA. The TNase-like domain occupies 27–157; the sequence is ELRGEVVRII…RGKRVGLWSD (131 aa). Active-site residues include R53, E61, and R95.

As to quaternary structure, monomer. The cofactor is Ca(2+). Post-translationally, the N-terminus is blocked.

Its subcellular location is the secreted. Its activity is regulated as follows. Endonuclease activity is inhibited by EDTA. Involved in plasmid partition. An endonuclease that acts on supercoiled dsDNA, converting it first to open circular DNA and then linearizing it. Preferentially cleaves regions in dsDNA that are capable of forming ssDNA, such as AT-rich regions and sequences that can form cruciforms. Has poor endonucleolytic activity on linear DNA, has 5'-3' exonuclease activity on dsDNA cleaving generating 3'-phosphonucleotides. This Escherichia coli protein is Protein ParB.